Consider the following 118-residue polypeptide: DNA-binding protein YG5714_1868 (118 aa).

Belongs to the PDCD5 family.

This chain is DNA-binding protein YG5714_1868, found in Saccharolobus islandicus (strain Y.G.57.14 / Yellowstone #1) (Sulfolobus islandicus).